A 240-amino-acid polypeptide reads, in one-letter code: 2,3,4,5-tetrahydropyridine-2,6-dicarboxylate N-acetyltransferase (240 aa).

The protein belongs to the transferase hexapeptide repeat family. DapH subfamily.

The catalysed reaction is (S)-2,3,4,5-tetrahydrodipicolinate + acetyl-CoA + H2O = L-2-acetamido-6-oxoheptanedioate + CoA. It participates in amino-acid biosynthesis; L-lysine biosynthesis via DAP pathway; LL-2,6-diaminopimelate from (S)-tetrahydrodipicolinate (acetylase route): step 1/3. Functionally, catalyzes the transfer of an acetyl group from acetyl-CoA to tetrahydrodipicolinate. The polypeptide is 2,3,4,5-tetrahydropyridine-2,6-dicarboxylate N-acetyltransferase (Bacillus anthracis (strain A0248)).